We begin with the raw amino-acid sequence, 312 residues long: Olfactory receptor 8H3 (312 aa).

Residues M1–M26 are Extracellular-facing. The N-linked (GlcNAc...) asparagine glycan is linked to N6. Residues A27–L47 traverse the membrane as a helical segment. Topologically, residues L48–Q55 are cytoplasmic. The chain crosses the membrane as a helical span at residues L56–T76. Topologically, residues V77–A99 are extracellular. Cysteines 97 and 189 form a disulfide. Residues Q100–Y120 traverse the membrane as a helical segment. Residues D121–R139 are Cytoplasmic-facing. A helical transmembrane segment spans residues L140–V160. Topologically, residues V161–M197 are extracellular. Residues L198–S217 form a helical membrane-spanning segment. The Cytoplasmic portion of the chain corresponds to Y218–A237. Residues F238 to T258 form a helical membrane-spanning segment. Over Y259–D271 the chain is Extracellular. A helical transmembrane segment spans residues Q272–L292. The Cytoplasmic portion of the chain corresponds to R293–R312.

It belongs to the G-protein coupled receptor 1 family.

The protein resides in the cell membrane. In terms of biological role, odorant receptor. In Homo sapiens (Human), this protein is Olfactory receptor 8H3 (OR8H3).